The following is a 712-amino-acid chain: Polyribonucleotide nucleotidyltransferase (712 aa).

Residues D487 and D493 each coordinate Mg(2+). The 60-residue stretch at P554 to I613 folds into the KH domain. The region spanning G623–K691 is the S1 motif domain.

The protein belongs to the polyribonucleotide nucleotidyltransferase family. It depends on Mg(2+) as a cofactor.

It is found in the cytoplasm. The enzyme catalyses RNA(n+1) + phosphate = RNA(n) + a ribonucleoside 5'-diphosphate. Functionally, involved in mRNA degradation. Catalyzes the phosphorolysis of single-stranded polyribonucleotides processively in the 3'- to 5'-direction. This Rhizobium etli (strain CIAT 652) protein is Polyribonucleotide nucleotidyltransferase.